Consider the following 204-residue polypeptide: Phosphoribosyl-dephospho-CoA transferase (204 aa).

Residues Asp129 and Asp131 contribute to the active site.

The protein belongs to the MdcG family.

The enzyme catalyses apo-[malonate decarboxylase ACP] + 2'-(5''-triphospho-alpha-D-ribosyl)-3'-dephospho-CoA = holo-[malonate decarboxylase ACP] + diphosphate. Functionally, transfers 2'-(5-triphosphoribosyl)-3'-dephosphocoenzyme-A to the apo-[acyl-carrier-protein] of the malonate decarboxylase to yield holo-[acyl-carrier-protein]. The chain is Phosphoribosyl-dephospho-CoA transferase from Pseudomonas putida (Arthrobacter siderocapsulatus).